The following is a 198-amino-acid chain: Imidazoleglycerol-phosphate dehydratase (198 aa).

Belongs to the imidazoleglycerol-phosphate dehydratase family.

Its subcellular location is the cytoplasm. The catalysed reaction is D-erythro-1-(imidazol-4-yl)glycerol 3-phosphate = 3-(imidazol-4-yl)-2-oxopropyl phosphate + H2O. Its pathway is amino-acid biosynthesis; L-histidine biosynthesis; L-histidine from 5-phospho-alpha-D-ribose 1-diphosphate: step 6/9. In Gluconacetobacter diazotrophicus (strain ATCC 49037 / DSM 5601 / CCUG 37298 / CIP 103539 / LMG 7603 / PAl5), this protein is Imidazoleglycerol-phosphate dehydratase.